Here is a 671-residue protein sequence, read N- to C-terminus: Receptor-interacting serine/threonine-protein kinase 1 (671 aa).

Ser-6 bears the Phosphoserine; by IKKA and IKKB mark. The 273-residue stretch at 17–289 folds into the Protein kinase domain; that stretch reads FLESAELDSG…GIEEKFRPFY (273 aa). The residue at position 20 (Ser-20) is a Phosphoserine; by autocatalysis. Residues 23-31 and Lys-45 contribute to the ATP site; that span reads LDSGGFGKV. Position 25 is a phosphoserine; by IKKA and IKKB (Ser-25). Asp-138 functions as the Proton acceptor in the catalytic mechanism. At Ser-161 the chain carries Phosphoserine; by RIPK3 and autocatalysis. Ser-166 carries the post-translational modification Phosphoserine; by autocatalysis. The segment at 290 to 582 is interaction with SQSTM1; it reads LSQLEESVEE…QAIFDNTTSL (293 aa). Ser-303 is subject to Phosphoserine. Ser-320, Ser-331, and Ser-333 each carry phosphoserine; by MAP3K7. Positions 331 to 348 are enriched in polar residues; it reads SRSNSATEQPGSLHSSQG. A disordered region spans residues 331–354; the sequence is SRSNSATEQPGSLHSSQGLGMGPV. A Glycyl lysine isopeptide (Lys-Gly) (interchain with G-Cter in ubiquitin) cross-link involves residue Lys-377. Position 384 is a phosphotyrosine (Tyr-384). Residues 389–455 form a disordered region; it reads SRMDRQTKQQ…GNAVHQPSGL (67 aa). Over residues 428–444 the composition is skewed to polar residues; sequence NFQNTEGKGTAYSSAAS. Residues 531-547 carry the RIP homotypic interaction motif (RHIM) motif; the sequence is YTIYNSTGIQIGAYNYM. The 87-residue stretch at 583–669 folds into the Death domain; sequence TDKHLDPIRE…DLLSSLIYVS (87 aa). (Microbial infection) N-beta-linked (GlcNAc) arginine glycosylation occurs at Arg-603.

The protein belongs to the protein kinase superfamily. TKL Ser/Thr protein kinase family. Homodimer. Interacts (via RIP homotypic interaction motif) with RIPK3 (via RIP homotypic interaction motif); this interaction induces RIPK1 phosphorylation and formation of a RIPK1-RIPK3 necroptosis-inducing complex. Upon TNF-induced necrosis, the RIPK1-RIPK3 dimer further interacts with PGAM5 and MLKL; the formation of this complex leads to PGAM5 phosphorylation and increase in PGAM5 phosphatase activity. Interacts (via the death domain) with TNFRSF6 (via the death domain) and TRADD (via the death domain). Is recruited by TRADD to TNFRSF1A in a TNF-dependent process. Binds RNF216, EGFR, IKBKG, TRAF1, TRAF2 and TRAF3. Interacts with BNLF1. Interacts with SQSTM1 upon TNF-alpha stimulation. May interact with MAVS/IPS1. Interacts with ZFAND5. Interacts with RBCK1. Interacts with ZBP1. Interacts with BIRC2/c-IAP1, BIRC3/c-IAP2 and XIAP/BIRC4. Interacts (via kinase domain) with DAB2IP (via Ras-GAP domain); the interaction occurs in a TNF-alpha-dependent manner. Interacts with ARHGEF2. Interacts (via protein kinase domain) with RFFL; involved in RIPK1 ubiquitination. Interacts with RNF34; involved in RIPK1 ubiquitination. Interacts with TICAM1 and this interaction is enhanced in the presence of WDFY1. Interacts with PELI1. Interacts (via death domain) with CRADD (via death domain); the interaction is direct. Component of complex IIa composed of at least RIPK1, FADD and CASP8. Component of the AIM2 PANoptosome complex, a multiprotein complex that drives inflammatory cell death (PANoptosis). Interacts with MAP3K7, CFLAR, CASP8, FADD and NEMO. Interacts with TAX1BP1; this interaction negatively regulates RIPK1 ubiquitination. Interacts with GRB2. Interacts with DDX24; this interaction disrupts RLR signaling activation of IFN-dependent transcription factor IRF7. As to quaternary structure, (Microbial infection) Interacts with mumps virus protein SH; this interaction inhibits downstream NF-kappa-B pathway activation. In terms of assembly, (Microbial infection) Interacts with Murid herpesvirus 1 protein RIR1. (Microbial infection) Interacts (via RIP homotypic interaction motif) with herpes simplex virus 1/HHV-1 protein RIR1/ICP6 (via RIP homotypic interaction motif); this interaction prevents necroptosis activation. As to quaternary structure, (Microbial infection) Interacts (via RIP homotypic interaction motif) with herpes simplex virus 2/HHV-2 protein RIR1/ICP10 (via RIP homotypic interaction motif); this interaction prevents necroptosis activation. Post-translationally, (Microbial infection) Proteolytically cleaved by S.flexneri OspD3 within the RIP homotypic interaction motif (RHIM), leading to its degradation and inhibition of necroptosis. In terms of processing, proteolytically cleaved by CASP8 at Asp-324. Cleavage is crucial for limiting TNF-induced apoptosis, necroptosis and inflammatory response. Cleavage abolishes NF-kappa-B activation and enhances the interaction of TRADD with FADD. Proteolytically cleaved by CASP6 during intrinsic apoptosis. RIPK1 and RIPK3 undergo reciprocal auto- and trans-phosphorylation. Phosphorylation of Ser-161 by RIPK3 is necessary for the formation of the necroptosis-inducing complex. Phosphorylation at Ser-25 represses its kinase activity and consequently prevents TNF-mediated RIPK1-dependent cell death. Phosphorylated at Ser-320 by MAP3K7 which requires prior ubiquitination with 'Lys-63'-linked chains by BIRC2/c-IAP1 and BIRC3/c-IAP2. This phosphorylation positively regulates RIPK1 interaction with RIPK3 to promote necroptosis but negatively regulates RIPK1 kinase activity and its interaction with FADD to mediate apoptosis. Post-translationally, deubiquitinated by USP7; this modification is required for TNF-alpha-induced apoptosis. In terms of processing, ubiquitinated with 'Lys-11'-, 'Lys-48'-, 'Lys-63'- and linear-linked type ubiquitin. Polyubiquitination with 'Lys-63'-linked chains by TRAF2 induces association with the IKK complex. Deubiquitination of 'Lys-63'-linked chains and polyubiquitination with 'Lys-48'-linked chains by TNFAIP3 leads to RIPK1 proteasomal degradation and consequently down-regulates TNF-alpha-induced NF-kappa-B signaling. 'Lys-48'-linked polyubiquitination by RFFL or RNF34 also promotes proteasomal degradation and negatively regulates TNF-alpha-induced NF-kappa-B signaling. Linear polyubiquitinated; the head-to-tail linear polyubiquitination ('Met-1'-linked) is mediated by the LUBAC complex and decreases protein kinase activity. Deubiquitination of linear polyubiquitin by CYLD promotes the kinase activity. Polyubiquitinated with 'Lys-48' and 'Lys-63'-linked chains by BIRC2/c-IAP1 and BIRC3/c-IAP2, leading to activation of NF-kappa-B. Ubiquitinated with 'Lys-63'-linked chains by PELI1. Ubiquitination at Lys-377 with 'Lys-63'-linked chains by BIRC2/c-IAP1 and BIRC3/c-IAP2 is essential for its phosphorylation at Ser-320 mediated by MAP3K7. This ubiquitination is required for NF-kB activation, suppresses RIPK1 kinase activity and plays a critical role in preventing cell death during embryonic development. (Microbial infection) Glycosylated at Arg-603 by enteropathogenic E.coli protein NleB1: arginine GlcNAcylation prevents homotypic/heterotypic death domain interactions.

The protein resides in the cytoplasm. The protein localises to the cell membrane. It carries out the reaction L-seryl-[protein] + ATP = O-phospho-L-seryl-[protein] + ADP + H(+). It catalyses the reaction L-threonyl-[protein] + ATP = O-phospho-L-threonyl-[protein] + ADP + H(+). Serine-threonine kinase activity is inhibited by linear polyubiquitination ('Met-1'-linked) by the LUBAC complex. Inhibited by necrostatins, including necrostatin-1, necrostatin-3 and necrostatin-4. Its function is as follows. Serine-threonine kinase which is a key regulator of TNF-mediated apoptosis, necroptosis and inflammatory pathways. Exhibits kinase activity-dependent functions that regulate cell death and kinase-independent scaffold functions regulating inflammatory signaling and cell survival. Has kinase-independent scaffold functions: upon binding of TNF to TNFR1, RIPK1 is recruited to the TNF-R1 signaling complex (TNF-RSC also known as complex I) where it acts as a scaffold protein promoting cell survival, in part, by activating the canonical NF-kappa-B pathway. Kinase activity is essential to regulate necroptosis and apoptosis, two parallel forms of cell death: upon activation of its protein kinase activity, regulates assembly of two death-inducing complexes, namely complex IIa (RIPK1-FADD-CASP8), which drives apoptosis, and the complex IIb (RIPK1-RIPK3-MLKL), which drives necroptosis. RIPK1 is required to limit CASP8-dependent TNFR1-induced apoptosis. In normal conditions, RIPK1 acts as an inhibitor of RIPK3-dependent necroptosis, a process mediated by RIPK3 component of complex IIb, which catalyzes phosphorylation of MLKL upon induction by ZBP1. Inhibits RIPK3-mediated necroptosis via FADD-mediated recruitment of CASP8, which cleaves RIPK1 and limits TNF-induced necroptosis. Required to inhibit apoptosis and necroptosis during embryonic development: acts by preventing the interaction of TRADD with FADD thereby limiting aberrant activation of CASP8. In addition to apoptosis and necroptosis, also involved in inflammatory response by promoting transcriptional production of pro-inflammatory cytokines, such as interleukin-6 (IL6). Phosphorylates RIPK3: RIPK1 and RIPK3 undergo reciprocal auto- and trans-phosphorylation. Phosphorylates DAB2IP at 'Ser-728' in a TNF-alpha-dependent manner, and thereby activates the MAP3K5-JNK apoptotic cascade. Required for ZBP1-induced NF-kappa-B activation in response to DNA damage. The polypeptide is Receptor-interacting serine/threonine-protein kinase 1 (Homo sapiens (Human)).